Reading from the N-terminus, the 108-residue chain is Transmembrane protein 213 (108 aa).

The N-terminal stretch at 1–27 (MKRLHLAPWTSLVLGLAFLSFHPVYLA) is a signal peptide. Residues 28 to 71 (EASSGSNSTSTVHHPENLETLEQCPNVDFCPQAARCCHTGVDEY) are Extracellular-facing. Asparagine 34 carries N-linked (GlcNAc...) asparagine glycosylation. The helical transmembrane segment at 72 to 92 (GWIAAAVGWSLLFLTLILLCV) threads the bilayer. Over 93–108 (DKLMKLTPDESKDLQA) the chain is Cytoplasmic.

Its subcellular location is the membrane. In Bos taurus (Bovine), this protein is Transmembrane protein 213 (TMEM213).